The following is a 298-amino-acid chain: tRNA(Met) cytidine acetate ligase (298 aa).

ATP-binding positions include 6–19 (IAEY…HIYQ), Gly100, Asn157, and Arg182.

The protein belongs to the TmcAL family.

It is found in the cytoplasm. It carries out the reaction cytidine(34) in elongator tRNA(Met) + acetate + ATP = N(4)-acetylcytidine(34) in elongator tRNA(Met) + AMP + diphosphate. Functionally, catalyzes the formation of N(4)-acetylcytidine (ac(4)C) at the wobble position of elongator tRNA(Met), using acetate and ATP as substrates. First activates an acetate ion to form acetyladenylate (Ac-AMP) and then transfers the acetyl group to tRNA to form ac(4)C34. This is tRNA(Met) cytidine acetate ligase from Mycoplasmopsis pulmonis (strain UAB CTIP) (Mycoplasma pulmonis).